We begin with the raw amino-acid sequence, 173 residues long: uncharacterized protein (173 aa).

4 consecutive transmembrane segments (helical) span residues Leu-13–Ser-35, Ile-50–Leu-72, Asn-107–Leu-129, and Gly-139–Leu-161.

The protein resides in the cell membrane. This is an uncharacterized protein from Rickettsia prowazekii (strain Madrid E).